The chain runs to 381 residues: E3 ubiquitin-protein ligase KCMF1 (381 aa).

Ser2 is subject to N-acetylserine. Residue Ser2 is modified to Phosphoserine. The segment at 4–60 adopts a ZZ-type zinc-finger fold; it reads HEGVSCDACLKGNFRGRRYKCLICYDYDLCASCYESGATTTRHTTDHPMQCILTRVD. The Zn(2+) site is built by Cys9, Cys12, Cys24, Cys27, Cys33, Cys36, His46, and His50. The C2H2-type zinc finger occupies 78-101; that stretch reads FTCPYCGKMGYTETSLQEHVTSEH. Positions 154-193 are disordered; the sequence is MFHPGRGLGGPRARRSNMHFTSSSTGGLSSSQSSYSPSNR. Phosphoserine is present on residues Ser169, Ser189, and Ser212. The segment covering 175 to 191 has biased composition (low complexity); it reads SSSTGGLSSSQSSYSPS. Residues 225-257 are a coiled coil; the sequence is SQLQQLQMQLQLERQHAQAARQQLETARNATRR. Positions 294–314 are disordered; the sequence is TRLNDPKMSETERQSMESERA. Positions 297–314 are enriched in basic and acidic residues; that stretch reads NDPKMSETERQSMESERA. Residues Ser335 and Ser336 each carry the phosphoserine modification.

Belongs to the KCMF1 family. As to quaternary structure, component of the SIFI complex, composed of KCMF1, UBR4 and calmodulin (CALM1, CALM2 or CALM3). As to expression, spleen, small intestine, ovary, peripheral blood, lung, kidney and pancreas. Expressed at low levels in the thymus, prostate, testis, colon, heart, brain, placenta and liver.

It localises to the cytoplasm. It is found in the late endosome. Its subcellular location is the lysosome. It catalyses the reaction S-ubiquitinyl-[E2 ubiquitin-conjugating enzyme]-L-cysteine + [acceptor protein]-L-lysine = [E2 ubiquitin-conjugating enzyme]-L-cysteine + N(6)-ubiquitinyl-[acceptor protein]-L-lysine.. It functions in the pathway protein modification; protein ubiquitination. Functionally, E3 ubiquitin-protein ligase which accepts ubiquitin from an E2 ubiquitin-conjugating enzyme and then transfers it to targeted substrates, promoting their degradation by the proteasome. Together with UBR4, component of the N-end rule pathway: ubiquitinates proteins bearing specific N-terminal residues that are destabilizing according to the N-end rule, leading to their degradation. Does not ubiquitinate proteins that are acetylated at the N-terminus. Together with UBR4, part of a protein quality control pathway that catalyzes ubiquitination and degradation of proteins that have been oxidized in response to reactive oxygen species (ROS): recognizes proteins with an Arg-CysO3(H) degron at the N-terminus, and mediates assembly of heterotypic 'Lys-63'-/'Lys-27'-linked branched ubiquitin chains on oxidized proteins, leading to their degradation by autophagy. Catalytic component of the SIFI complex, a multiprotein complex required to inhibit the mitochondrial stress response after a specific stress event has been resolved: ubiquitinates and degrades (1) components of the HRI-mediated signaling of the integrated stress response, such as DELE1 and EIF2AK1/HRI, as well as (2) unimported mitochondrial precursors. Within the SIFI complex, UBR4 initiates ubiquitin chain that are further elongated or branched by KCMF1. In Homo sapiens (Human), this protein is E3 ubiquitin-protein ligase KCMF1.